The following is an 874-amino-acid chain: Probable inorganic carbon transporter subunit DabA (874 aa).

Zn(2+) contacts are provided by cysteine 398, aspartate 400, histidine 580, and cysteine 595.

Belongs to the inorganic carbon transporter (TC 9.A.2) DabA family. Forms a complex with DabB. Requires Zn(2+) as cofactor.

It localises to the cell membrane. Part of an energy-coupled inorganic carbon pump. In Bacillus cytotoxicus (strain DSM 22905 / CIP 110041 / 391-98 / NVH 391-98), this protein is Probable inorganic carbon transporter subunit DabA.